A 503-amino-acid chain; its full sequence is Guanosine-5'-triphosphate,3'-diphosphate pyrophosphatase (503 aa).

This sequence belongs to the GppA/Ppx family. GppA subfamily.

The catalysed reaction is guanosine 3'-diphosphate 5'-triphosphate + H2O = guanosine 3',5'-bis(diphosphate) + phosphate + H(+). The protein operates within purine metabolism; ppGpp biosynthesis; ppGpp from GTP: step 2/2. Its function is as follows. Catalyzes the conversion of pppGpp to ppGpp. Guanosine pentaphosphate (pppGpp) is a cytoplasmic signaling molecule which together with ppGpp controls the 'stringent response', an adaptive process that allows bacteria to respond to amino acid starvation, resulting in the coordinated regulation of numerous cellular activities. The polypeptide is Guanosine-5'-triphosphate,3'-diphosphate pyrophosphatase (Pseudoalteromonas atlantica (strain T6c / ATCC BAA-1087)).